Here is a 380-residue protein sequence, read N- to C-terminus: MKKISILGSTGSIGTQTLDVIREHGDMQVVALSCGRNLSLIEKQAREFKPQFVSVSDENDAKKLRTSLADTDIEVGYGMDGLIRCATIEPCDIVVTAIVGMLGIRPTIAAIKAKKTIALANKETLVTAGHIIIPLAKEYGVSILPVDSEHSAIFQSLQGNSMNPIKKILLTASGGPFRGRKLSELEGIRVEDALKHPNWSMGQKITIDSSTMVNKGLEVIEAKWLFDVDLSQIQVVVHPQSVIHSAVEYADGAVIAQLGTPDMRIPIQYALYYPSRPALSGDRLDLFKLKDLTFEAPDLDTFKGLALAMKAARAGGNIPTAFNAANERAVALFLNKKIKYLEIIDIIEACMENASFIENPSVDEILDTEQCAYDYISKRW.

The NADPH site is built by T10, G11, S12, I13, G35, R36, N37, and N121. K122 provides a ligand contact to 1-deoxy-D-xylulose 5-phosphate. Position 123 (E123) interacts with NADPH. D147 lines the Mn(2+) pocket. Residues S148, E149, S173, and H196 each coordinate 1-deoxy-D-xylulose 5-phosphate. Position 149 (E149) interacts with Mn(2+). G202 is a binding site for NADPH. Residues S209, N214, K215, and E218 each contribute to the 1-deoxy-D-xylulose 5-phosphate site. E218 contacts Mn(2+).

The protein belongs to the DXR family. It depends on Mg(2+) as a cofactor. Mn(2+) serves as cofactor.

The enzyme catalyses 2-C-methyl-D-erythritol 4-phosphate + NADP(+) = 1-deoxy-D-xylulose 5-phosphate + NADPH + H(+). It functions in the pathway isoprenoid biosynthesis; isopentenyl diphosphate biosynthesis via DXP pathway; isopentenyl diphosphate from 1-deoxy-D-xylulose 5-phosphate: step 1/6. Catalyzes the NADPH-dependent rearrangement and reduction of 1-deoxy-D-xylulose-5-phosphate (DXP) to 2-C-methyl-D-erythritol 4-phosphate (MEP). The chain is 1-deoxy-D-xylulose 5-phosphate reductoisomerase from Agathobacter rectalis (strain ATCC 33656 / DSM 3377 / JCM 17463 / KCTC 5835 / VPI 0990) (Eubacterium rectale).